A 153-amino-acid chain; its full sequence is uncharacterized protein (153 aa).

The N-terminal stretch at 1 to 22 (MKMLKKGTAVLFVMIMAVMLVA) is a signal peptide. Cysteine 23 carries N-palmitoyl cysteine lipidation. The S-diacylglycerol cysteine moiety is linked to residue cysteine 23. The disordered stretch occupies residues 117 to 153 (DMNKIPGMSSNGDTSKGISMEESAKMLESQGYKEVSK). Over residues 124 to 133 (MSSNGDTSKG) the composition is skewed to polar residues.

It to E.coli YehR.

The protein localises to the cell membrane. This is an uncharacterized protein from Listeria monocytogenes serovar 1/2a (strain ATCC BAA-679 / EGD-e).